Reading from the N-terminus, the 336-residue chain is MPDDSTAPKRILSGAQPTGQLHLGNYLGAVRNWVSEQRQYDSYFCVVDLHALTVPQEAAELRAATRRTAALYLACGIDPERSTVFVQSHVSAHTELTWLFNCLTPINWLERMIQFKEKAIKLGEEVGIGLFDYPVLQAADILLYEPHLVPVGEDQRQHLELTRDIARRFNDRYGESLRVPEMLIRKEGARVMSLQDGTSKMSKSDPSDLSRLNLLDAPEKLRDKIKRAKSDAVMGLKFDPARPECTNLLTIYQLLSGESPEAVEARFADAGFGRFKPILADLVIEYLRPIRERYDAIAGESGYLEGILREGALRASKVAGLTLERIRDRMGLLPPF.

ATP is bound by residues 16-18 and 24-25; these read QPT and GN. A 'HIGH' region motif is present at residues 17 to 25; the sequence is PTGQLHLGN. Residue D140 participates in L-tryptophan binding. Residues 152–154, V191, and 200–204 contribute to the ATP site; these read GED and KMSKS. The 'KMSKS' region motif lies at 200 to 204; sequence KMSKS.

It belongs to the class-I aminoacyl-tRNA synthetase family. Homodimer.

It is found in the cytoplasm. The catalysed reaction is tRNA(Trp) + L-tryptophan + ATP = L-tryptophyl-tRNA(Trp) + AMP + diphosphate + H(+). In terms of biological role, catalyzes the attachment of tryptophan to tRNA(Trp). This is Tryptophan--tRNA ligase from Gloeobacter violaceus (strain ATCC 29082 / PCC 7421).